A 406-amino-acid polypeptide reads, in one-letter code: Vacuole membrane protein 1 (406 aa).

A compositionally biased stretch (basic and acidic residues) spans 1–21 (MAENGKNCDQRRVAMNKEHHN). The segment at 1 to 35 (MAENGKNCDQRRVAMNKEHHNGNFTDPSSVNEKKR) is disordered. Ala-2 bears the N-acetylalanine mark. Residues 2 to 43 (AENGKNCDQRRVAMNKEHHNGNFTDPSSVNEKKRREREERQN) are Cytoplasmic-facing. The chain crosses the membrane as a helical span at residues 44–64 (IVLWRQPLITLQYFSLEILVI). Topologically, residues 65-77 (LKEWTSKLWHRQS) are extracellular. Residues 78-98 (IVVSFLLLLAVLIATYYVEGV) form a helical membrane-spanning segment. Residues 99-109 (HQQYVQRIEKQ) lie on the Cytoplasmic side of the membrane. A helical membrane pass occupies residues 110-130 (FLLYAYWIGLGILSSVGLGTG). Over 131–250 (LHTFLLYLGP…ASRAKLAVQK (120 aa)) the chain is Extracellular. The VTT domain stretch occupies residues 173–316 (GTEGTISLWS…FVIITFSKHI (144 aa)). A helical membrane pass occupies residues 251-271 (LVQKVGFFGILACASIPNPLF). Over 272–273 (DL) the chain is Cytoplasmic. A helical transmembrane segment spans residues 274–294 (AGITCGHFLVPFWTFFGATLI). At 295–305 (GKAIIKMHIQK) the chain is on the extracellular side. Residues 306-326 (IFVIITFSKHIVEQMVAFIGA) traverse the membrane as a helical segment. At 327–363 (VPGIGPSLQKPFQEYLEAQRQKLHHKSEMGTPQGENW) the chain is on the cytoplasmic side. Residues 364–384 (LSWMFEKLVVVMVCYFILSII) traverse the membrane as a helical segment. At 385 to 406 (NSMAQSYAKRIQQRLNSEEKTK) the chain is on the extracellular side.

The protein belongs to the VMP1 family. In terms of assembly, interacts with BECN1. Interacts with TJP1. Interacts with TP53INP2. Interacts with TMEM41B. Interacts with ATP2A2, PLN and SLN; competes with PLN and SLN to prevent them from forming an inhibitory complex with ATP2A2. Interacts with ATG2A.

It is found in the endoplasmic reticulum-Golgi intermediate compartment membrane. The protein localises to the cell membrane. The protein resides in the vacuole membrane. Its subcellular location is the endoplasmic reticulum membrane. It catalyses the reaction a 1,2-diacyl-sn-glycero-3-phospho-L-serine(in) = a 1,2-diacyl-sn-glycero-3-phospho-L-serine(out). The enzyme catalyses cholesterol(in) = cholesterol(out). The catalysed reaction is a 1,2-diacyl-sn-glycero-3-phosphocholine(in) = a 1,2-diacyl-sn-glycero-3-phosphocholine(out). It carries out the reaction a 1,2-diacyl-sn-glycero-3-phosphoethanolamine(in) = a 1,2-diacyl-sn-glycero-3-phosphoethanolamine(out). In terms of biological role, phospholipid scramblase involved in lipid homeostasis and membrane dynamics processes. Has phospholipid scramblase activity toward cholesterol and phosphatidylserine, as well as phosphatidylethanolamine and phosphatidylcholine. Required for autophagosome formation: participates in early stages of autophagosome biogenesis at the endoplasmic reticulum (ER) membrane by reequilibrating the leaflets of the ER as lipids are extracted by ATG2 (ATG2A or ATG2B) to mediate autophagosome assembly. Regulates ATP2A2 activity to control ER-isolation membrane contacts for autophagosome formation. In addition to autophagy, involved in other processes in which phospholipid scramblase activity is required. Modulates ER contacts with lipid droplets, mitochondria and endosomes. Plays an essential role in formation of cell junctions. Upon stress such as bacterial and viral infection, promotes formation of cytoplasmic vacuoles followed by cell death. Involved in the cytoplasmic vacuolization of acinar cells during the early stage of acute pancreatitis. Functionally, (Microbial infection) Host factor required for infection by all flaviviruses tested such as Zika virus and Yellow fever virus. Probably required post-entry of the virus to facilitate the ER membrane remodeling necessary to form replication organelles. This is Vacuole membrane protein 1 from Homo sapiens (Human).